A 67-amino-acid chain; its full sequence is Probable Sec-independent protein translocase protein TatE (67 aa).

A helical membrane pass occupies residues 1-21 (MEGISIAKLLIIGALIVLLFG). The disordered stretch occupies residues 44 to 67 (KDEDTSAARTTAEETPAERVSHKD).

It belongs to the TatA/E family. TatE subfamily.

It is found in the cell inner membrane. Part of the twin-arginine translocation (Tat) system that transports large folded proteins containing a characteristic twin-arginine motif in their signal peptide across membranes. TatE shares overlapping functions with TatA. This Pantoea ananatis (strain LMG 20103) protein is Probable Sec-independent protein translocase protein TatE.